A 323-amino-acid chain; its full sequence is Olfactory receptor 51S1 (323 aa).

At 1–33 (MSTLPTQIAPNSSTSMAPTFLLVGMPGLSGAPS) the chain is on the extracellular side. N-linked (GlcNAc...) asparagine glycosylation occurs at Asn11. The chain crosses the membrane as a helical span at residues 34 to 54 (WWTLPLIAVYLLSALGNGTIL). At 55–62 (WIIALQPA) the chain is on the cytoplasmic side. The helical transmembrane segment at 63 to 83 (LHRPMHFFLFLLSVSDIGLVT) threads the bilayer. The Extracellular portion of the chain corresponds to 84–107 (ALMPTLLGIALAGAHTVPASACLL). A disulfide bridge connects residues Cys105 and Cys197. Residues 108 to 128 (QMVFIHVFSVMESSVLLAMSI) form a helical membrane-spanning segment. Residues 129-147 (DRALAICRPLHYPALLTNG) lie on the Cytoplasmic side of the membrane. A helical transmembrane segment spans residues 148-168 (VISKISLAISFRCLGLHLPLP). Topologically, residues 169 to 203 (FLLAYMPYCLPQVLTHSYCLHPDVARLACPEAWGA) are extracellular. The helical transmembrane segment at 204–224 (AYSLFVVLSAMGLDPLLIFFS) threads the bilayer. Residues 225–244 (YGLIGKVLQGVESREDRWKA) lie on the Cytoplasmic side of the membrane. Residues 245–265 (GQTCAAHLSAVLLFYIPMILL) traverse the membrane as a helical segment. Residues 266 to 280 (ALINHPELPITQHTH) are Extracellular-facing. A helical membrane pass occupies residues 281–301 (TLLSYVHFLLPPLINPILYSV). Residues 302–323 (KMKEIRKRILNRLQPRKVGGAQ) lie on the Cytoplasmic side of the membrane.

This sequence belongs to the G-protein coupled receptor 1 family.

It is found in the cell membrane. In terms of biological role, odorant receptor. The chain is Olfactory receptor 51S1 (OR51S1) from Homo sapiens (Human).